The following is a 1552-amino-acid chain: ABC multidrug transporter lscH (1552 aa).

Helical transmembrane passes span 32-52 (ETIL…IPII) and 68-88 (WFKK…VGLW). N-linked (GlcNAc...) asparagine glycosylation is present at Asn91. Helical transmembrane passes span 100–120 (STPS…LSTI), 158–178 (HSAI…MLLL), 280–300 (LFQI…IELA), 311–331 (NGYG…VSVG), 413–433 (AACV…VFLA), 457–477 (ALAS…FSVI), 500–520 (ILSI…FAGI), and 528–548 (LTIA…SPLA). Residues 280–559 (LFQIGFTYAQ…IVQALPQISG (280 aa)) enclose the ABC transmembrane type-1 1 domain. The tract at residues 573–655 (AEERHDPRST…PDANGDSRDA (83 aa)) is disordered. Residues 581-602 (STTTGTSPESNNGSQQTLSDKQ) show a composition bias toward polar residues. N-linked (GlcNAc...) asparagine glycosylation is present at Asn592. The ABC transporter 1 domain occupies 639-884 (GHLADTTPDA…AELGWADRDL (246 aa)). 676 to 683 (GPVGCGKS) contributes to the ATP binding site. N-linked (GlcNAc...) asparagine glycosylation is found at Asn719 and Asn834. A compositionally biased stretch (basic and acidic residues) spans 887 to 912 (QQEKPGKDELNHEHGEYSESAPEKLR). Residues 887–917 (QQEKPGKDELNHEHGEYSESAPEKLRRSQTN) form a disordered region. Transmembrane regions (helical) follow at residues 957–977 (GWLT…CDSF) and 1005–1025 (AVLG…LFII). The region spanning 963 to 1241 (IFVIAICVYA…ATITSWVTLE (279 aa)) is the ABC transmembrane type-1 2 domain. N-linked (GlcNAc...) asparagine glycosylation occurs at Asn1028. 4 consecutive transmembrane segments (helical) span residues 1076–1096 (AALG…LVCV), 1100–1120 (YMAA…HFYL), 1184–1204 (WITF…IVLT), and 1210–1230 (AIGP…SATM). The 244-residue stretch at 1295–1538 (IELDNVTASY…PTSIFKELYL (244 aa)) folds into the ABC transporter 2 domain. 2 N-linked (GlcNAc...) asparagine glycosylation sites follow: Asn1299 and Asn1313. Residue 1328–1335 (GRTGSGKS) participates in ATP binding.

This sequence belongs to the ABC transporter superfamily. ABCC family. Conjugate transporter (TC 3.A.1.208) subfamily.

The protein resides in the cell membrane. Functionally, ABC multidrug transporter; part of the gene cluster that mediates the biosynthesis of the lipopeptide antibiotics leucinostatins that show extensive biological activities, including antimalarial, antiviral, antibacterial, antifungal, and antitumor activities, as well as phytotoxic. May be involved in the efflux of leucinostatins. The chain is ABC multidrug transporter lscH from Purpureocillium lilacinum (Paecilomyces lilacinus).